The primary structure comprises 122 residues: Phospholipase A2 crotoxin basic chain (122 aa).

7 cysteine pairs are disulfide-bonded: Cys26–Cys115, Cys28–Cys44, Cys43–Cys95, Cys49–Cys122, Cys50–Cys88, Cys57–Cys81, and Cys75–Cys86. Tyr27, Gly29, and Gly31 together coordinate Ca(2+). His47 is a catalytic residue. Ca(2+) is bound at residue Asp48. The active site involves Asp89.

In terms of assembly, heterodimer of one acidic (CA also named crotapotin) and one basic (CB) subunits; non-covalently linked. The cofactor is Ca(2+). Expressed by the venom gland.

The protein resides in the secreted. The enzyme catalyses a 1,2-diacyl-sn-glycero-3-phosphocholine + H2O = a 1-acyl-sn-glycero-3-phosphocholine + a fatty acid + H(+). Functionally, heterodimer CA-CB: Crotoxin is a potent presynaptic neurotoxin that possesses phospholipase A2 (PLA2) activity and exerts a lethal action by blocking neuromuscular transmission. It consists of a non-covalent association of a basic and weakly toxic PLA2 subunit (CB), with a small acidic, non-enzymatic and non-toxic subunit (CA also named crotapotin). The complex acts by binding to a specific 48-kDa protein (R48) receptor located on presynaptic membranes, forming a transient ternary complex CA-CB-R48, followed by dissociation of the CA-CB complex and release of the CA subunit. At equilibrium, only the CB subunits remain associated with the specific crotoxin receptor. In addition to neurotoxicity, crotoxin has been found to exert nephrotoxicity, and cardiovascular toxicity. Moreover, anti-inflammatory, immunomodulatory, anti-tumor and analgesic effects of crotoxin have also been reported. Its function is as follows. Monomer CB: The basic subunit of crotoxin is a snake venom phospholipase A2 (PLA2) that exhibits weak neurotoxicity and strong anticoagulant effects by binding to factor Xa (F10) and inhibiting the prothrombinase activity. In addition, it exerts myotoxicity, nephrotoxicity, and cardiovascular toxicity as well as anti-inflammatory, immunomodulatory, anti-tumor and analgesic effects. Also shows a strong antimicrobial activity against X.axonopodis passiforae (Gram-negative) which is completely dependent on the enzymatic activity. PLA2 catalyzes the calcium-dependent hydrolysis of the 2- acyl groups in 3-sn-phosphoglycerides. The polypeptide is Phospholipase A2 crotoxin basic chain (Crotalus durissus collilineatus (Brazilian rattlesnake)).